A 488-amino-acid chain; its full sequence is MEGTEARQRRLEGCGRLKELGPLPSHDAGRLPKASEEGHLAVSESQLVDAKSLEAPPGRETSLIIGFQVVIPFLLAGVGLSWAGLLLNYFQHWPVFKDVKDLMTLVPPLVGLKGNLEMTLASRLSTSANTGQIDDRQERYKIISSNLAVVQVQATVVGLLAAVASLMLGTVSHEEFDWSKVALLCTSSVITAFLAALALGILMICIVIGARKFGVNPDNIATPIAASLGDLITLSILALMSSFFYSHKDTWYLTPLVCVGFLALTPLWLFIAKQNPPIMKILKYGWFPIILAMIISSFGGLILSKTISKHEFKGMAVLTPVMCGVGGNLVAIQTSRISTFLHMWSTPGVLPVQMKRFWPNPCFIFCSSEINSVSARVLLFLVVPGHLIFFYLICLVEGQSVTNSKIFILLYLVAGVVQVVILLYLAEVTVRLTWHQALDPDNHCIPYLTGLGDLLGTSLLALCFFLDWLLRGRANLQELVSELVSVPP.

2 stretches are compositionally biased toward basic and acidic residues: residues M1–E19 and D27–E36. Positions M1 to E36 are disordered. Transmembrane regions (helical) follow at residues L63–A83, L147–M167, V189–G209, I220–M240, W251–I271, Y284–S304, V377–E397, I406–A426, and G450–L470.

The protein belongs to the SLC41A transporter family.

Its subcellular location is the mitochondrion inner membrane. The catalysed reaction is Mg(2+)(in) + 2 Na(+)(out) = Mg(2+)(out) + 2 Na(+)(in). Na(+)/Mg(2+) ion exchanger that acts as a predominant Mg(2+) efflux system at the mitochondrial inner membrane. This is Solute carrier family 41 member 3 (Slc41a3) from Mus musculus (Mouse).